Here is a 117-residue protein sequence, read N- to C-terminus: Large ribosomal subunit protein bL20 (117 aa).

It belongs to the bacterial ribosomal protein bL20 family.

Functionally, binds directly to 23S ribosomal RNA and is necessary for the in vitro assembly process of the 50S ribosomal subunit. It is not involved in the protein synthesizing functions of that subunit. The protein is Large ribosomal subunit protein bL20 of Aliivibrio fischeri (strain ATCC 700601 / ES114) (Vibrio fischeri).